Here is a 355-residue protein sequence, read N- to C-terminus: UDP-N-acetylglucosamine--N-acetylmuramyl-(pentapeptide) pyrophosphoryl-undecaprenol N-acetylglucosamine transferase (355 aa).

UDP-N-acetyl-alpha-D-glucosamine contacts are provided by residues 14-16 (TGG), asparagine 126, arginine 162, serine 190, isoleucine 243, 262-267 (ALTVSE), and glutamine 287.

Belongs to the glycosyltransferase 28 family. MurG subfamily.

It localises to the cell inner membrane. The catalysed reaction is di-trans,octa-cis-undecaprenyl diphospho-N-acetyl-alpha-D-muramoyl-L-alanyl-D-glutamyl-meso-2,6-diaminopimeloyl-D-alanyl-D-alanine + UDP-N-acetyl-alpha-D-glucosamine = di-trans,octa-cis-undecaprenyl diphospho-[N-acetyl-alpha-D-glucosaminyl-(1-&gt;4)]-N-acetyl-alpha-D-muramoyl-L-alanyl-D-glutamyl-meso-2,6-diaminopimeloyl-D-alanyl-D-alanine + UDP + H(+). It functions in the pathway cell wall biogenesis; peptidoglycan biosynthesis. Cell wall formation. Catalyzes the transfer of a GlcNAc subunit on undecaprenyl-pyrophosphoryl-MurNAc-pentapeptide (lipid intermediate I) to form undecaprenyl-pyrophosphoryl-MurNAc-(pentapeptide)GlcNAc (lipid intermediate II). The sequence is that of UDP-N-acetylglucosamine--N-acetylmuramyl-(pentapeptide) pyrophosphoryl-undecaprenol N-acetylglucosamine transferase from Vibrio campbellii (strain ATCC BAA-1116).